We begin with the raw amino-acid sequence, 117 residues long: Large ribosomal subunit protein uL18 (117 aa).

The protein belongs to the universal ribosomal protein uL18 family. Part of the 50S ribosomal subunit; part of the 5S rRNA/L5/L18/L25 subcomplex. Contacts the 5S and 23S rRNAs.

Its function is as follows. This is one of the proteins that bind and probably mediate the attachment of the 5S RNA into the large ribosomal subunit, where it forms part of the central protuberance. In Cronobacter sakazakii (strain ATCC BAA-894) (Enterobacter sakazakii), this protein is Large ribosomal subunit protein uL18.